A 524-amino-acid polypeptide reads, in one-letter code: Na(+)/H(+) antiporter NhaB (524 aa).

9 helical membrane passes run phenylalanine 13–proline 33, leucine 98–phenylalanine 118, alanine 140–valine 160, phenylalanine 239–leucine 259, alanine 304–valine 324, glycine 325–glycine 345, leucine 358–isoleucine 378, alanine 448–isoleucine 468, and alanine 479–valine 499.

The protein belongs to the NhaB Na(+)/H(+) (TC 2.A.34) antiporter family.

The protein localises to the cell inner membrane. It catalyses the reaction 2 Na(+)(in) + 3 H(+)(out) = 2 Na(+)(out) + 3 H(+)(in). Its function is as follows. Na(+)/H(+) antiporter that extrudes sodium in exchange for external protons. This is Na(+)/H(+) antiporter NhaB from Yersinia pestis (strain Pestoides F).